Consider the following 307-residue polypeptide: Plasmodesmata-located protein 2 (307 aa).

The signal sequence occupies residues 1 to 23 (MGLSISFLSIIMMMCLLFPDLNV). At 24-275 (VVKSATTEYT…STSTGATGKT (252 aa)) the chain is on the extracellular side. 2 Gnk2-homologous domains span residues 33–136 (TTLI…VSGF) and 141–240 (GMEM…YYPN). 6 disulfides stabilise this stretch: C40-C114, C90-C99, C102-C127, C149-C218, C194-C203, and C206-C231. The segment covering 246–268 (SSSSSSSSSSSSSGSSNSDPSTS) has biased composition (low complexity). Positions 246-270 (SSSSSSSSSSSSSGSSNSDPSTSTG) are disordered. A helical membrane pass occupies residues 276–296 (VAIIVGGAAGVGFLVICLLFA). The segment at 276–296 (VAIIVGGAAGVGFLVICLLFA) is necessary and sufficient for plasmodesmal targeting. The Cytoplasmic portion of the chain corresponds to 297–307 (KNLMRKKHDDY).

The protein belongs to the cysteine-rich repeat secretory protein family. Plasmodesmata-located proteins (PDLD) subfamily. In terms of assembly, (Microbial infection) Interacts with Grapevine fanleaf virus (GFLV) 2B-MP. In terms of tissue distribution, highly expressed in inflorescence shoot apex. Uniformly expressed within the inflorescence meristem with the exception of a boundary zone between floral primordia and the meristem where the expression is weaker (at protein level).

The protein resides in the cell membrane. It localises to the cell junction. The protein localises to the plasmodesma. Its function is as follows. Modulates cell-to-cell trafficking. The protein is Plasmodesmata-located protein 2 of Arabidopsis thaliana (Mouse-ear cress).